A 259-amino-acid chain; its full sequence is Protein YIF1B (259 aa).

An N-acetylmethionine modification is found at methionine 1. The disordered stretch occupies residues 1-61 (MHATGLAAPA…QPSPGSLGYP (61 aa)). Over 9–153 (PAGTPRLRKW…APRFDINAPD (145 aa)) the chain is Cytoplasmic. Threonine 12 carries the post-translational modification Phosphothreonine. A compositionally biased stretch (basic residues) spans 14–24 (RLRKWPSKRRV). Serine 64 is modified (phosphoserine). A helical membrane pass occupies residues 154 to 174 (LYIPAMAFITYILVAGLALGT). Over 175–186 (QDRMIGGVLTGL) the chain is Extracellular. A helical transmembrane segment spans residues 187 to 207 (LFGKIGYYLVLAWCCVSIFVF). Residues 208–237 (MIRTLRLKILAQAAAEGVPVRGARNQLRMY) lie on the Cytoplasmic side of the membrane. The helical transmembrane segment at 238–258 (LTMAVAAAQPVLMYWLTFHLV) threads the bilayer. Residue arginine 259 is a topological domain, extracellular.

The protein belongs to the YIF1 family. As to quaternary structure, interacts with HTR1A (via C-terminus). Interacts with ABCB9 (via TMD0); this interaction allows (but is not essential) the ER-to-Golgi trafficking and strongly depends on a salt bridge within TMD0. As to expression, highly expressed in brain. Expressed in heart, kidney, and lung and lower levels in spleen, muscle, and intestine (at protein level). Expressed in serotoninergic neurons (at protein level).

The protein localises to the endoplasmic reticulum membrane. The protein resides in the golgi apparatus membrane. Its subcellular location is the endoplasmic reticulum-Golgi intermediate compartment membrane. In terms of biological role, functions in endoplasmic reticulum to Golgi vesicle-mediated transport and regulates the proper organization of the endoplasmic reticulum and the Golgi. Plays a key role in targeting to neuronal dendrites receptors such as HTR1A. Plays also a role in primary cilium and sperm flagellum assembly probably through protein transport to these compartments. In Rattus norvegicus (Rat), this protein is Protein YIF1B.